A 371-amino-acid polypeptide reads, in one-letter code: GDSL esterase/lipase At3g27950 (371 aa).

Residues 1–23 form the signal peptide; the sequence is MAISKITLAIIVLLLGFTEKLSA. The active-site Nucleophile is S39. N82, N143, N178, N194, and N315 each carry an N-linked (GlcNAc...) asparagine glycan. Active-site residues include D334 and H337.

Belongs to the 'GDSL' lipolytic enzyme family.

The protein resides in the secreted. The protein is GDSL esterase/lipase At3g27950 of Arabidopsis thaliana (Mouse-ear cress).